A 778-amino-acid polypeptide reads, in one-letter code: Melanoma-associated antigen D1 (778 aa).

Disordered regions lie at residues 41–60 (PTNQ…PTAN), 78–123 (FKVQ…KGPN), and 182–333 (KAWN…PAWQ). Position 92 is a phosphotyrosine (tyrosine 92). Polar residues-rich tracts occupy residues 104–118 (PNTQ…QNAT), 185–211 (NDTT…SQAD), 225–240 (TAQT…NLES), 253–263 (NNLNVEENSSG), and 300–319 (LAWQ…TPPA). 19 consecutive repeat copies span residues 296 to 301 (WQTPLA), 302 to 307 (WQNPSG), 308 to 313 (WQNQTA), 332 to 337 (WQNPVA), 338 to 343 (WQNPVI), 344 to 349 (WPNPVI), 350 to 355 (WQNPVI), 356 to 361 (WPNPIV), 362 to 367 (WPGPVV), 368 to 373 (WPNPLA), 374 to 379 (WQNPPG), 380 to 385 (WQTPPG), 386 to 391 (WQTPPG), 392 to 397 (WQGPPD), 398 to 403 (WQGPPD), 404 to 409 (WPLPPD), 410 to 415 (WPLPPD), 416 to 421 (WPLPTD), and 422 to 427 (WPLPPD). Positions 296-444 (WQTPLAWQNP…IPPDWQNLRP (149 aa)) are 22 X 6 AA tandem repeats of W-[PQ]-X-P-X-X. The segment at 376–412 (NPPGWQTPPGWQTPPGWQGPPDWQGPPDWPLPPDWPL) is disordered. Residues 377–397 (PPGWQTPPGWQTPPGWQGPPD) show a composition bias toward low complexity. Residues 398-412 (WQGPPDWPLPPDWPL) show a composition bias toward pro residues. One copy of the 20; approximate repeat lies at 428–432 (WIPAD). A run of 2 repeats spans residues 433–438 (WPIPPD) and 439–444 (WQNLRP). A compositionally biased stretch (low complexity) spans 440 to 455 (QNLRPSPNLRPSPNSR). Residues 440 to 466 (QNLRPSPNLRPSPNSRASQNPGAAQPR) form a disordered region. The MAGE domain occupies 471-669 (LQERANKLVK…RDWTAQFMEA (199 aa)).

As to quaternary structure, interacts with DLX5, DLX7 and MSX2 and forms homomultimers. Interacts with UNC5A. Interacts with TRIM28 and PJA1. Interacts with NGFR/p75NTR and RORA. As to expression, expressed in bone marrow stromal cells from both multiple myeloma patients and healthy donors. Seems to be ubiquitously expressed.

The protein localises to the cytoplasm. It is found in the cell membrane. It localises to the nucleus. Involved in the apoptotic response after nerve growth factor (NGF) binding in neuronal cells. Inhibits cell cycle progression, and facilitates NGFR-mediated apoptosis. May act as a regulator of the function of DLX family members. May enhance ubiquitin ligase activity of RING-type zinc finger-containing E3 ubiquitin-protein ligases. Proposed to act through recruitment and/or stabilization of the Ubl-conjugating enzyme (E2) at the E3:substrate complex. Plays a role in the circadian rhythm regulation. May act as RORA co-regulator, modulating the expression of core clock genes such as BMAL1 and NFIL3, induced, or NR1D1, repressed. The chain is Melanoma-associated antigen D1 (MAGED1) from Homo sapiens (Human).